The primary structure comprises 125 residues: Holo-[acyl-carrier-protein] synthase (125 aa).

The Mg(2+) site is built by Asp8 and Glu57.

Belongs to the P-Pant transferase superfamily. AcpS family. It depends on Mg(2+) as a cofactor.

It is found in the cytoplasm. It carries out the reaction apo-[ACP] + CoA = holo-[ACP] + adenosine 3',5'-bisphosphate + H(+). Functionally, transfers the 4'-phosphopantetheine moiety from coenzyme A to a Ser of acyl-carrier-protein. In Halothermothrix orenii (strain H 168 / OCM 544 / DSM 9562), this protein is Holo-[acyl-carrier-protein] synthase.